A 398-amino-acid polypeptide reads, in one-letter code: Acetate kinase (398 aa).

Residue Asn8 coordinates Mg(2+). Lys15 lines the ATP pocket. Arg89 is a substrate binding site. The Proton donor/acceptor role is filled by Asp146. Residues 206 to 210 (HIGNG), 283 to 285 (DMR), and 331 to 335 (GMGEN) each bind ATP. Residue Glu383 coordinates Mg(2+).

It belongs to the acetokinase family. Homodimer. Mg(2+) serves as cofactor. Requires Mn(2+) as cofactor.

Its subcellular location is the cytoplasm. The enzyme catalyses acetate + ATP = acetyl phosphate + ADP. Its pathway is metabolic intermediate biosynthesis; acetyl-CoA biosynthesis; acetyl-CoA from acetate: step 1/2. Catalyzes the formation of acetyl phosphate from acetate and ATP. Can also catalyze the reverse reaction. This Streptococcus pyogenes serotype M28 (strain MGAS6180) protein is Acetate kinase.